The following is a 300-amino-acid chain: GTPase Era (300 aa).

In terms of domain architecture, Era-type G spans R8–E176. The segment at G16–S23 is G1. A GTP-binding site is contributed by G16–S23. Residues Q42–H46 form a G2 region. The tract at residues D63 to G66 is G3. Residues D63 to M67 and N125 to D128 contribute to the GTP site. Residues N125 to D128 are G4. Residues I155–A157 are G5. Positions V199 to G283 constitute a KH type-2 domain.

The protein belongs to the TRAFAC class TrmE-Era-EngA-EngB-Septin-like GTPase superfamily. Era GTPase family. As to quaternary structure, monomer.

The protein resides in the cytoplasm. It localises to the cell inner membrane. Its function is as follows. An essential GTPase that binds both GDP and GTP, with rapid nucleotide exchange. Plays a role in 16S rRNA processing and 30S ribosomal subunit biogenesis and possibly also in cell cycle regulation and energy metabolism. This chain is GTPase Era, found in Pseudomonas syringae pv. tomato (strain ATCC BAA-871 / DC3000).